The primary structure comprises 260 residues: Exosome complex component Rrp4 (260 aa).

One can recognise an S1 motif domain in the interval 59-128 (NDVVIGVVIV…SSMKIELALR (70 aa)). Residues 136 to 194 (RTGQIVEVEPVKVPRVIGHGGSMISMLKKETNCSIFVGQNGRIWIDGKDEDIELLSKAL) form the KH domain.

Belongs to the RRP4 family. In terms of assembly, component of the archaeal exosome complex. Forms a trimer of Rrp4 and/or Csl4 subunits. The trimer associates with a hexameric ring-like arrangement composed of 3 Rrp41-Rrp42 heterodimers.

It localises to the cytoplasm. Its function is as follows. Non-catalytic component of the exosome, which is a complex involved in RNA degradation. Increases the RNA binding and the efficiency of RNA degradation. Confers strong poly(A) specificity to the exosome. The polypeptide is Exosome complex component Rrp4 (Methanosarcina mazei (strain ATCC BAA-159 / DSM 3647 / Goe1 / Go1 / JCM 11833 / OCM 88) (Methanosarcina frisia)).